A 407-amino-acid polypeptide reads, in one-letter code: Histidine--tRNA ligase (407 aa).

The protein belongs to the class-II aminoacyl-tRNA synthetase family. In terms of assembly, homodimer.

Its subcellular location is the cytoplasm. It catalyses the reaction tRNA(His) + L-histidine + ATP = L-histidyl-tRNA(His) + AMP + diphosphate + H(+). This is Histidine--tRNA ligase from Wolbachia pipientis subsp. Culex pipiens (strain wPip).